The following is a 445-amino-acid chain: C4-dicarboxylate transport protein (445 aa).

Helical transmembrane passes span 24-44 (VLYVQVLIAIVLGVLLGWVSP), 62-82 (LIKMVIAPIIFCTVVSGIAHI), 105-125 (FALILGLIVGNLVPVGHGLAA), 163-183 (GDILQVLLFAILFGFALMALG), 201-221 (FGVIAIVMKAAPVGAFGAMAF), 237-257 (LVALFYATAALFVFVVLGLIA), 322-342 (IYMTLATLFIAQALGIELTFT), and 370-390 (AGTLAAVNPALVPGMAIVFSI).

Belongs to the dicarboxylate/amino acid:cation symporter (DAACS) (TC 2.A.23) family.

It localises to the cell inner membrane. Functionally, responsible for the transport of dicarboxylates such as succinate, fumarate, and malate from the periplasm across the membrane. This Rhodopseudomonas palustris (strain BisB5) protein is C4-dicarboxylate transport protein.